An 868-amino-acid polypeptide reads, in one-letter code: MSILSILKKDTNIDMQENNINDLVASASRVIAPLWPISTFAAHHPWMGLEKQSFEQVADWLKEIRNVDIYPSAAMIHSAKAKGEIEESFLQSGLSRWLDSQSFHIPRKKVEQFCQVALKLEELPSSLLSLPEVNKLAEEMSYINTESMKDSSLQPVSSLIENQKGENLSDILNYHIIKWCKLYLDDSGSSWTMPNREKGFYRAWQHLIKFDPALSKNERKVLKDWPQDAQVALARALSELGISESNIQAYLEGHLLSLPGWAGMIRWRSQQSIQEQELLIEYLAVRISMELAITKPYLPLKNQKVEKKVAIVPLIASWIYWGNISTREWLQMPAAEQSELLVFAYRFDENIRRKLWLEAWEQTHAEQLRKKIASKQRATNDKKRVLAQLAFCIDVRSEPFRRHLEKLGPFETFGIAGFFGLPIATSELGSNNNHPSLPVILKPKHQIKELTNENELKSYEQRKRVGSSVRYTFKTMKQNVLTSMALPELSGPLFGLQMVTRSFVPRGVGAFIRNLRKTMLQKPDTTFSLNHVHDTKGEIPIGFTKEEKVNYVRQALKMVGLTEKFAPLVVMCGHSSQSTNNPYAAALECGACGGAAGGFNARVFATLCNLPEVREALAAEGIKIPEDTIFAAAEHKTTVDELEWIYVPELSEAAQEAFDCIESIMPNVSQHANRERLTQLPNFKTKIKNASKEAHRFAEDWSEIRPEWGLARNASFIIGQRELTQDCDLEGRAFLHNYDWKQDESGDILANIIAGPGTVAQWINLQYYASTVAPHYYGSGNKTTQTVTAGLGVMQGNASDLLPGLPWQSVMQSDSETYHSPLRLLIVIQAPIEYIERLLNNDFTFREKVQNGWVRLASVDPEGRWKNW.

Zn(2+)-binding residues include cysteine 392, aspartate 394, histidine 574, and cysteine 589.

Belongs to the inorganic carbon transporter (TC 9.A.2) DabA family. As to quaternary structure, forms a complex with DabB. Requires Zn(2+) as cofactor.

Its subcellular location is the cell membrane. Part of an energy-coupled inorganic carbon pump. This is Probable inorganic carbon transporter subunit DabA from Bacillus cereus (strain G9842).